The following is a 255-amino-acid chain: 5-oxoprolinase subunit A (255 aa).

This sequence belongs to the LamB/PxpA family. In terms of assembly, forms a complex composed of PxpA, PxpB and PxpC.

It carries out the reaction 5-oxo-L-proline + ATP + 2 H2O = L-glutamate + ADP + phosphate + H(+). Its function is as follows. Catalyzes the cleavage of 5-oxoproline to form L-glutamate coupled to the hydrolysis of ATP to ADP and inorganic phosphate. The sequence is that of 5-oxoprolinase subunit A from Rhodopseudomonas palustris (strain BisA53).